The primary structure comprises 127 residues: Gamma-synuclein (127 aa).

A run of 2 repeats spans residues 20–30 (EKTKQGVTEAA) and 31–41 (EKTKEGVMYVG). Positions 20 to 67 (EKTKQGVTEAAEKTKEGVMYVGAKTKEGVVQSVTSVAEKTKEQANAVS) are 4 X 11 AA tandem repeats of [EGSA]-K-T-K-[EQ]-[GQ]-V-X(4). The 3; approximate repeat unit spans residues 42–56 (AKTKEGVVQSVTSVA). Repeat unit 4 spans residues 57-67 (EKTKEQANAVS). Phosphoserine is present on residues Ser67, Ser72, and Ser124. Positions 99 to 127 (ALKQPVPSQEDEAAKAEEQVAEETKSGGD) are disordered. The segment covering 110-127 (EAAKAEEQVAEETKSGGD) has biased composition (basic and acidic residues).

This sequence belongs to the synuclein family. As to quaternary structure, may be a centrosome-associated protein. Interacts with MYOC; affects its secretion and its aggregation. Post-translationally, phosphorylated by BARK1 and GRK5. As to expression, predominantly expressed in retina (predominantly in outer nuclear layer, also in inner segment of photoreceptor cells, some individual cells located in the inner nuclear layer, inner plexiform layer and in nerve fiber layer). Also found in brain and heart.

The protein localises to the cytoplasm. Its subcellular location is the perinuclear region. It is found in the cytoskeleton. It localises to the microtubule organizing center. The protein resides in the centrosome. The protein localises to the spindle. Plays a role in neurofilament network integrity. May be involved in modulating axonal architecture during development and in the adult. In vitro, increases the susceptibility of neurofilament-H to calcium-dependent proteases. May also function in modulating the keratin network in skin. Activates the MAPK and Elk-1 signal transduction pathway. This Bos taurus (Bovine) protein is Gamma-synuclein (SNCG).